A 274-amino-acid chain; its full sequence is Large ribosomal subunit protein uL2 (274 aa).

Disordered regions lie at residues 28–53 (APYAPLLEKNSKSGGRNNNGRITVRH) and 223–274 (VAMN…RRNK). Residues 39–48 (KSGGRNNNGR) are compositionally biased toward low complexity.

This sequence belongs to the universal ribosomal protein uL2 family. In terms of assembly, part of the 50S ribosomal subunit. Forms a bridge to the 30S subunit in the 70S ribosome.

In terms of biological role, one of the primary rRNA binding proteins. Required for association of the 30S and 50S subunits to form the 70S ribosome, for tRNA binding and peptide bond formation. It has been suggested to have peptidyltransferase activity; this is somewhat controversial. Makes several contacts with the 16S rRNA in the 70S ribosome. This is Large ribosomal subunit protein uL2 from Pseudoalteromonas atlantica (strain T6c / ATCC BAA-1087).